A 644-amino-acid polypeptide reads, in one-letter code: Phosphomethylpyrimidine synthase (644 aa).

Residues Asn-236, Met-265, Tyr-294, His-330, 350–352, 391–394, and Glu-430 contribute to the substrate site; these read SRG and DGLR. His-434 serves as a coordination point for Zn(2+). Tyr-457 lines the substrate pocket. A Zn(2+)-binding site is contributed by His-498. [4Fe-4S] cluster-binding residues include Cys-578, Cys-581, and Cys-586. Positions 623 to 644 are disordered; it reads RQKSEEFKASGSELYHPAVEAE.

This sequence belongs to the ThiC family. Homodimer. It depends on [4Fe-4S] cluster as a cofactor.

The enzyme catalyses 5-amino-1-(5-phospho-beta-D-ribosyl)imidazole + S-adenosyl-L-methionine = 4-amino-2-methyl-5-(phosphooxymethyl)pyrimidine + CO + 5'-deoxyadenosine + formate + L-methionine + 3 H(+). It functions in the pathway cofactor biosynthesis; thiamine diphosphate biosynthesis. Functionally, catalyzes the synthesis of the hydroxymethylpyrimidine phosphate (HMP-P) moiety of thiamine from aminoimidazole ribotide (AIR) in a radical S-adenosyl-L-methionine (SAM)-dependent reaction. The sequence is that of Phosphomethylpyrimidine synthase from Aliivibrio fischeri (strain MJ11) (Vibrio fischeri).